Reading from the N-terminus, the 159-residue chain is Endoribonuclease YbeY (159 aa).

His-124, His-128, and His-134 together coordinate Zn(2+).

The protein belongs to the endoribonuclease YbeY family. Requires Zn(2+) as cofactor.

The protein localises to the cytoplasm. Its function is as follows. Single strand-specific metallo-endoribonuclease involved in late-stage 70S ribosome quality control and in maturation of the 3' terminus of the 16S rRNA. This is Endoribonuclease YbeY from Halalkalibacterium halodurans (strain ATCC BAA-125 / DSM 18197 / FERM 7344 / JCM 9153 / C-125) (Bacillus halodurans).